The following is a 554-amino-acid chain: Membrane protein insertase YidC (554 aa).

5 helical membrane passes run 7 to 24 (VLWV…DNWQ), 362 to 382 (FVGN…AVFF), 436 to 456 (LPVV…LASV), 475 to 495 (PFFI…SLNP), and 510 to 530 (PIAF…YYVV).

It belongs to the OXA1/ALB3/YidC family. Type 1 subfamily. In terms of assembly, interacts with the Sec translocase complex via SecD. Specifically interacts with transmembrane segments of nascent integral membrane proteins during membrane integration.

It is found in the cell inner membrane. Required for the insertion and/or proper folding and/or complex formation of integral membrane proteins into the membrane. Involved in integration of membrane proteins that insert both dependently and independently of the Sec translocase complex, as well as at least some lipoproteins. Aids folding of multispanning membrane proteins. The protein is Membrane protein insertase YidC of Burkholderia ambifaria (strain MC40-6).